Here is a 294-residue protein sequence, read N- to C-terminus: Cell division protein ZipA (294 aa).

M1 is a topological domain (periplasmic). A helical transmembrane segment spans residues 2 to 22 (EIGLREWLILIGIIVIAGILF). Residues 23 to 294 (DGWRRMRGGK…FERRALTQKR (272 aa)) lie on the Cytoplasmic side of the membrane. A disordered region spans residues 47 to 107 (PDEEGSAEVL…GKRAAEMQPQ (61 aa)). Over residues 82–91 (AREREREQKP) the composition is skewed to basic and acidic residues.

Belongs to the ZipA family. As to quaternary structure, interacts with FtsZ via their C-terminal domains.

The protein localises to the cell inner membrane. In terms of biological role, essential cell division protein that stabilizes the FtsZ protofilaments by cross-linking them and that serves as a cytoplasmic membrane anchor for the Z ring. Also required for the recruitment to the septal ring of downstream cell division proteins. The protein is Cell division protein ZipA of Pseudomonas putida (strain W619).